Consider the following 204-residue polypeptide: 3,4-dihydroxy-2-butanone 4-phosphate synthase (204 aa).

Glutamate 27 provides a ligand contact to Mg(2+). Residue aspartate 31 coordinates D-ribulose 5-phosphate. The residue at position 56 (cysteine 56) is an S-glutathionyl cysteine. D-ribulose 5-phosphate-binding positions include threonine 82 and 140-144 (RDGHT). Histidine 143 lines the Mg(2+) pocket.

It belongs to the DHBP synthase family. Homodimer. It depends on Mg(2+) as a cofactor. Mn(2+) is required as a cofactor. In terms of processing, S-glutathionylation is reversible and dependent on a glutaredoxin.

It catalyses the reaction D-ribulose 5-phosphate = (2S)-2-hydroxy-3-oxobutyl phosphate + formate + H(+). It functions in the pathway cofactor biosynthesis; riboflavin biosynthesis; 2-hydroxy-3-oxobutyl phosphate from D-ribulose 5-phosphate: step 1/1. In terms of biological role, catalyzes the conversion of D-ribulose 5-phosphate to formate and 3,4-dihydroxy-2-butanone 4-phosphate. This Schizosaccharomyces pombe (strain 972 / ATCC 24843) (Fission yeast) protein is 3,4-dihydroxy-2-butanone 4-phosphate synthase.